Here is a 452-residue protein sequence, read N- to C-terminus: Phosphoglucosamine mutase (452 aa).

The active-site Phosphoserine intermediate is Ser108. 4 residues coordinate Mg(2+): Ser108, Asp247, Asp249, and Asp251. The residue at position 108 (Ser108) is a Phosphoserine.

Belongs to the phosphohexose mutase family. Mg(2+) is required as a cofactor. Activated by phosphorylation.

The catalysed reaction is alpha-D-glucosamine 1-phosphate = D-glucosamine 6-phosphate. Catalyzes the conversion of glucosamine-6-phosphate to glucosamine-1-phosphate. This Paraburkholderia phymatum (strain DSM 17167 / CIP 108236 / LMG 21445 / STM815) (Burkholderia phymatum) protein is Phosphoglucosamine mutase.